The sequence spans 405 residues: MTRALVIVLDSVGIGGAPDGAAYGDGGADTLGHIAEACAEGRGDRPGLRAGPLRLPHLAGLGLGLAAREASGRMPPGLAPDGPVAGAWGHAVETARGKDTVSGHWEIAGAPVDFDWGRFPATRPSFPPDLTRALIEEGNLPGILGDCHASGTAVIEAYGAEHLRSGKPICYTSVDSVFQIAAHEEAFGLERLYALCGIARRLCDPYRIGRVIARPFAGSAGTGFVRTANRRDFATPPPGDTLLDRLAAAGRPLVSVGKIGDIFAHRHTGTEVKPAGNDACLDAALAAFADLGPGGLVFANLVDFDTEYGHRRDVPGYAAALERFDARLPEIRAALRPGDLCLVTADHGNDPTWTGTDHTREQVPVLAFGPGQRPGPIGRREGLADIGATVAAHLGLALPAGRSWL.

Mn(2+) contacts are provided by Asp10, Asp305, His310, Asp346, His347, and His358.

It belongs to the phosphopentomutase family. Mn(2+) serves as cofactor.

Its subcellular location is the cytoplasm. The enzyme catalyses 2-deoxy-alpha-D-ribose 1-phosphate = 2-deoxy-D-ribose 5-phosphate. It carries out the reaction alpha-D-ribose 1-phosphate = D-ribose 5-phosphate. The protein operates within carbohydrate degradation; 2-deoxy-D-ribose 1-phosphate degradation; D-glyceraldehyde 3-phosphate and acetaldehyde from 2-deoxy-alpha-D-ribose 1-phosphate: step 1/2. Its function is as follows. Isomerase that catalyzes the conversion of deoxy-ribose 1-phosphate (dRib-1-P) and ribose 1-phosphate (Rib-1-P) to deoxy-ribose 5-phosphate (dRib-5-P) and ribose 5-phosphate (Rib-5-P), respectively. The polypeptide is Phosphopentomutase (Methylobacterium sp. (strain 4-46)).